Consider the following 363-residue polypeptide: Peroxisomal (S)-2-hydroxyacid oxidase GLO4 (363 aa).

In terms of domain architecture, FMN hydroxy acid dehydrogenase spans 1 to 357; the sequence is MDQIVNVDEF…TRNHVRTENE (357 aa). FMN contacts are provided by residues 78–80, serine 107, 128–130, and threonine 156; these read PTA and QIY. A 2-oxocarboxylate is bound at residue tyrosine 130. Arginine 165 contributes to the a 2-oxocarboxylate binding site. Lysine 228 and serine 250 together coordinate FMN. Histidine 252 serves as the catalytic Proton acceptor. Arginine 255 is an a 2-oxocarboxylate binding site. Residues 283–287 and 306–307 contribute to the FMN site; these read DGGVR and GR. Positions 361–363 match the Microbody targeting signal motif; it reads SML.

The protein belongs to the FMN-dependent alpha-hydroxy acid dehydrogenase family. As to quaternary structure, homotetramer. FMN serves as cofactor.

It is found in the peroxisome. The catalysed reaction is a (2S)-2-hydroxycarboxylate + O2 = a 2-oxocarboxylate + H2O2. It carries out the reaction 2-hydroxydodecanoate + O2 = 2-oxododecanoate + H2O2. It catalyses the reaction 2-hydroxyhexanoate + O2 = 2-oxohexanoate + H2O2. The enzyme catalyses 2-hydroxyoctanoate + O2 = 2-oxooctanoate + H2O2. The catalysed reaction is (S)-lactate + O2 = pyruvate + H2O2. It functions in the pathway lipid metabolism; fatty acid metabolism. Functionally, oxidase that catalyzes the oxidation of a broad range of 2-hydroxyacids to the corresponding 2-oxoacids, with a reduction of O2 to H2O2. Displays the highest activity with the long-chain fatty acid 2-hydroxydodecanoate and has intermediate activity with 2-hydroxyhexanoate, 2-hydroxyoctanote, and the short-chain hydroxyacid (S)-lactate (L-lactate). With much lower activity, it can also use glycolate, leucic acid, valic acid, and isoleucic acid as substrates in vitro. Cannot use 2-hydroxyhexadecanoate or D-lactate as substrates. May be involved in a general medium- and long-chain fatty acid catabolic pathway such as alpha-oxidation. This is Peroxisomal (S)-2-hydroxyacid oxidase GLO4 (GLO4) from Arabidopsis thaliana (Mouse-ear cress).